A 163-amino-acid polypeptide reads, in one-letter code: ATP synthase subunit b 1 (163 aa).

A helical membrane pass occupies residues 5–25 (FDATFFAFVGLILFLALVVYL).

Belongs to the ATPase B chain family. In terms of assembly, F-type ATPases have 2 components, F(1) - the catalytic core - and F(0) - the membrane proton channel. F(1) has five subunits: alpha(3), beta(3), gamma(1), delta(1), epsilon(1). F(0) has three main subunits: a(1), b(2) and c(10-14). The alpha and beta chains form an alternating ring which encloses part of the gamma chain. F(1) is attached to F(0) by a central stalk formed by the gamma and epsilon chains, while a peripheral stalk is formed by the delta and b chains.

It is found in the cell inner membrane. Its function is as follows. F(1)F(0) ATP synthase produces ATP from ADP in the presence of a proton or sodium gradient. F-type ATPases consist of two structural domains, F(1) containing the extramembraneous catalytic core and F(0) containing the membrane proton channel, linked together by a central stalk and a peripheral stalk. During catalysis, ATP synthesis in the catalytic domain of F(1) is coupled via a rotary mechanism of the central stalk subunits to proton translocation. Component of the F(0) channel, it forms part of the peripheral stalk, linking F(1) to F(0). In Rhizobium etli (strain ATCC 51251 / DSM 11541 / JCM 21823 / NBRC 15573 / CFN 42), this protein is ATP synthase subunit b 1.